The chain runs to 449 residues: Zinc finger and BTB domain-containing protein 14 (449 aa).

In terms of domain architecture, BTB spans 36–102 (CDIAIVVEDV…MYTAKISVKK (67 aa)). Lysine 46 is covalently cross-linked (Glycyl lysine isopeptide (Lys-Gly) (interchain with G-Cter in SUMO2)). The short motif at 50–66 (HRCVLAACSTYFKKLFK) is the Nuclear localization signal element. Residues 153 to 194 (GDAADTQDDDVEEIGDQDDSPSDDTVEGTPPSQEDGKSPTTT) form a disordered region. Positions 157–178 (DTQDDDVEEIGDQDDSPSDDTV) are enriched in acidic residues. Residues lysine 203 and lysine 249 each participate in a glycyl lysine isopeptide (Lys-Gly) (interchain with G-Cter in SUMO2) cross-link. 5 C2H2-type zinc fingers span residues 277–304 (IACQ…ADRP), 305–332 (FVCE…GYKP), 333–360 (YSCE…NERP), 361–388 (FACH…GEKP), and 389–417 (FVCG…ERKQ).

This sequence belongs to the krueppel C2H2-type zinc-finger protein family. Interacts with ZBTB21.

It localises to the nucleus. Its function is as follows. Transcriptional activator of the dopamine transporter (DAT), binding it's promoter at the consensus sequence 5'-CCTGCACAGTTCACGGA-3'. Binds to 5'-d(GCC)(n)-3' trinucleotide repeats in promoter regions and acts as a repressor of the FMR1 gene. Transcriptional repressor of MYC and thymidine kinase promoters. In Homo sapiens (Human), this protein is Zinc finger and BTB domain-containing protein 14 (ZBTB14).